The sequence spans 420 residues: Bicoumarin synthase ktnC (420 aa).

Cys362 is a heme binding site.

Belongs to the cytochrome P450 family. It depends on heme as a cofactor.

The enzyme catalyses 2 7-demethylsiderin + NADPH + O2 = orlandin + NADP(+) + 2 H2O. The protein operates within secondary metabolite biosynthesis. Functionally, non-reducing polyketide synthase; part of the gene cluster that mediates the biosynthesis of the bicoumarin kotanin. The non-reducing polyketide synthase ktnS first catalyzes the formation of the pentaketidic 4,7-dihydroxy-5-methylcoumarin from acetyl coenzyme A and 4 malonyl coenzyme A molecules. Further O-methylation by ktnB leads to the formation of 7-demethylsiderin. Then, an oxidative phenol coupling catalyzed by the cytochrome P450 monooxygenase ktnC forms the 8,8'-dimer P-orlandin via dimerization the monomeric precursor, 7-demethylsiderin. P-orlandin is subsequently O-methylated in a stepwise fashion to demethylkotanin and kotanin. The chain is Bicoumarin synthase ktnC from Aspergillus niger (strain ATCC MYA-4892 / CBS 513.88 / FGSC A1513).